The primary structure comprises 1066 residues: Probable sucrose-phosphate synthase 4 (1066 aa).

2 disordered regions span residues 132–166 (YAAA…GRMP) and 688–714 (PRHP…SLRD). The segment covering 143-162 (EGEKGENINESSSTHDESTR) has biased composition (basic and acidic residues).

This sequence belongs to the glycosyltransferase 1 family. Homodimer or homotetramer. As to expression, expressed in germinating seeds.

It catalyses the reaction beta-D-fructose 6-phosphate + UDP-alpha-D-glucose = sucrose 6(F)-phosphate + UDP + H(+). It functions in the pathway glycan biosynthesis; sucrose biosynthesis; sucrose from D-fructose 6-phosphate and UDP-alpha-D-glucose: step 1/2. Its activity is regulated as follows. Activity is regulated by phosphorylation and moderated by concentration of metabolites and light. Its function is as follows. Plays a role in photosynthetic sucrose synthesis by catalyzing the rate-limiting step of sucrose biosynthesis from UDP-glucose and fructose- 6-phosphate. Involved in the regulation of carbon partitioning in the leaves of plants. May regulate the synthesis of sucrose and therefore play a major role as a limiting factor in the export of photoassimilates out of the leaf. Plays a role for sucrose availability that is essential for plant growth and fiber elongation. This chain is Probable sucrose-phosphate synthase 4 (SPS4), found in Oryza sativa subsp. japonica (Rice).